A 172-amino-acid polypeptide reads, in one-letter code: AIG2-like protein C (172 aa).

Residue 13–18 (YGSLQE) coordinates substrate. The active-site Proton acceptor is Glu-81.

It belongs to the gamma-glutamylcyclotransferase family. In terms of tissue distribution, expressed in flowers, leaves, stems and roots.

Functionally, putative gamma-glutamylcyclotransferase. This is AIG2-like protein C from Arabidopsis thaliana (Mouse-ear cress).